The primary structure comprises 293 residues: Elongation factor Ts (293 aa).

Positions 80–83 (TDFV) are involved in Mg(2+) ion dislocation from EF-Tu.

This sequence belongs to the EF-Ts family.

It localises to the cytoplasm. In terms of biological role, associates with the EF-Tu.GDP complex and induces the exchange of GDP to GTP. It remains bound to the aminoacyl-tRNA.EF-Tu.GTP complex up to the GTP hydrolysis stage on the ribosome. The polypeptide is Elongation factor Ts (Paraburkholderia xenovorans (strain LB400)).